A 463-amino-acid polypeptide reads, in one-letter code: Glutamate--tRNA ligase 1 (463 aa).

A 'HIGH' region motif is present at residues 10 to 20 (PSPTGYLHIGG). The short motif at 238-242 (KLSKR) is the 'KMSKS' region element. Lys-241 contacts ATP.

It belongs to the class-I aminoacyl-tRNA synthetase family. Glutamate--tRNA ligase type 1 subfamily. As to quaternary structure, monomer.

The protein resides in the cytoplasm. The catalysed reaction is tRNA(Glu) + L-glutamate + ATP = L-glutamyl-tRNA(Glu) + AMP + diphosphate. Its function is as follows. Catalyzes the attachment of glutamate to tRNA(Glu) in a two-step reaction: glutamate is first activated by ATP to form Glu-AMP and then transferred to the acceptor end of tRNA(Glu). The chain is Glutamate--tRNA ligase 1 from Helicobacter pylori (strain HPAG1).